The sequence spans 284 residues: MSEPAQPSEPAPALVALRGAAFAYEEGPDVLTGLDFAVREGRALALLGRNGSGKTTLMRLLSGGLKPHTGTLTLGGEPVAYDRKGLTRLRTTVQLVVQDPDDQLFAASVGQDVSFGPLNLGLSDAEVRSRVGEALAALDISGLAERPTHLLSYGQRKRTAIAGAVAMRPRVLILDEPTAGLDPDGQERLLATLDGLRAGGTTVVMATHDVDLALRWSDDAALLTPEGVRTGPTAATLARTDLLRRAGLRLPWGVAATGLLRARGLLADSATGPRTAEELAALAE.

The 236-residue stretch at 15–250 (VALRGAAFAY…DLLRRAGLRL (236 aa)) folds into the ABC transporter domain. 48-55 (GRNGSGKT) is an ATP binding site.

Belongs to the ABC transporter superfamily.

It localises to the cell membrane. Functionally, probably part of an ABC transporter complex. Responsible for energy coupling to the transport system. The polypeptide is Putative ABC transporter ATP-binding protein SCO5958 (Streptomyces coelicolor (strain ATCC BAA-471 / A3(2) / M145)).